Reading from the N-terminus, the 653-residue chain is Probable syringafactin export ATP-binding/permease protein SyfD (653 aa).

In terms of domain architecture, ABC transporter spans L6–T244. G42–S49 is a binding site for ATP. 5 helical membrane passes run L252–S272, L278–G298, L526–M546, M583–F603, and L616–V636.

The protein belongs to the ABC transporter superfamily. Macrolide exporter (TC 3.A.1.122) family. In terms of assembly, probably part of a tripartite efflux system, which is composed of an inner membrane transporter, a periplasmic membrane fusion protein, and an outer membrane component.

It is found in the cell inner membrane. Probably involved in the export of syringafactins. In Pseudomonas syringae pv. syringae (strain B728a), this protein is Probable syringafactin export ATP-binding/permease protein SyfD.